The following is a 390-amino-acid chain: Methylthioribose-1-phosphate isomerase (390 aa).

Aspartate 263 acts as the Proton donor in catalysis.

Belongs to the eIF-2B alpha/beta/delta subunits family. MtnA subfamily.

The protein localises to the cytoplasm. Its subcellular location is the nucleus. The enzyme catalyses 5-(methylsulfanyl)-alpha-D-ribose 1-phosphate = 5-(methylsulfanyl)-D-ribulose 1-phosphate. Its pathway is amino-acid biosynthesis; L-methionine biosynthesis via salvage pathway; L-methionine from S-methyl-5-thio-alpha-D-ribose 1-phosphate: step 1/6. In terms of biological role, catalyzes the interconversion of methylthioribose-1-phosphate (MTR-1-P) into methylthioribulose-1-phosphate (MTRu-1-P). This Meyerozyma guilliermondii (strain ATCC 6260 / CBS 566 / DSM 6381 / JCM 1539 / NBRC 10279 / NRRL Y-324) (Yeast) protein is Methylthioribose-1-phosphate isomerase.